Here is a 430-residue protein sequence, read N- to C-terminus: Probable protein phosphatase 1N (430 aa).

The segment at 16–65 is disordered; sequence CKKKEREKEGREEEEEEEAGRRAPEGPRSLLTAPRRAQRPHGGAEASGGL. Residues 17–26 are compositionally biased toward basic and acidic residues; the sequence is KKKEREKEGR. The region spanning 66-326 is the PPM-type phosphatase domain; that stretch reads RFGASAAQGW…DNMTCILVCF (261 aa). Mn(2+) is bound by residues D103, G104, D274, and D317. The disordered stretch occupies residues 407–430; the sequence is GEKGQDGAGKSNPTHLGSALDMEA.

Belongs to the PP2C family. It depends on Mg(2+) as a cofactor. Mn(2+) is required as a cofactor.

It carries out the reaction O-phospho-L-seryl-[protein] + H2O = L-seryl-[protein] + phosphate. The enzyme catalyses O-phospho-L-threonyl-[protein] + H2O = L-threonyl-[protein] + phosphate. The polypeptide is Probable protein phosphatase 1N (PPM1N) (Homo sapiens (Human)).